A 276-amino-acid polypeptide reads, in one-letter code: Ribosomal RNA small subunit methyltransferase A (276 aa).

6 residues coordinate S-adenosyl-L-methionine: His15, Leu17, Gly42, Glu64, Asp89, and Asn108.

Belongs to the class I-like SAM-binding methyltransferase superfamily. rRNA adenine N(6)-methyltransferase family. RsmA subfamily.

It localises to the cytoplasm. It catalyses the reaction adenosine(1518)/adenosine(1519) in 16S rRNA + 4 S-adenosyl-L-methionine = N(6)-dimethyladenosine(1518)/N(6)-dimethyladenosine(1519) in 16S rRNA + 4 S-adenosyl-L-homocysteine + 4 H(+). In terms of biological role, specifically dimethylates two adjacent adenosines (A1518 and A1519) in the loop of a conserved hairpin near the 3'-end of 16S rRNA in the 30S particle. May play a critical role in biogenesis of 30S subunits. The polypeptide is Ribosomal RNA small subunit methyltransferase A (Prochlorococcus marinus (strain MIT 9515)).